A 339-amino-acid chain; its full sequence is Mitogen-activated protein kinase kinase kinase 18 (339 aa).

A Protein kinase domain is found at 3–263 (WTRGKTLGRG…ASQLLNHPFL (261 aa)). Residues 9–17 (LGRGSTATV) and Lys-32 each bind ATP. Asp-131 serves as the catalytic Proton acceptor. Ser-301 is subject to Phosphoserine.

Belongs to the protein kinase superfamily. Ser/Thr protein kinase family. As to quaternary structure, interacts with ABI1. Binds to MKK3. Associates with SRK2E within the nucleus. In terms of processing, autophosphorylated. Unstable protein degraded by the proteasome pathway; this degradation is promoted by ABI1, but blocked by ABA. In terms of tissue distribution, expressed in roots, leaves and flowers.

It is found in the nucleus. It catalyses the reaction L-seryl-[protein] + ATP = O-phospho-L-seryl-[protein] + ADP + H(+). The enzyme catalyses L-threonyl-[protein] + ATP = O-phospho-L-threonyl-[protein] + ADP + H(+). Kinase activity is activated by abscisic acid (ABA). Inhibited by ABI1. Activated by SRK2E. Its function is as follows. Component of the abscisic acid (ABA) signaling pathway that acts as ABA signal transducer in the context of abiotic stresses. Triggers MPK1, MPK2, MPK7 and MPK14 activation in a MKK3-dependent manner and MPK6 activation in a MKK3-independent manner. Mediates the ABA-dependent activation of the MKK3-MPK7 module. Positive regulator of ABA responses leading to the induction of gene expression (e.g. RD29B and RAB18) and involved in various responses including stomatal development, stomatal movement, inhibition of germination and root growth. Promotes leaf senescence. In Arabidopsis thaliana (Mouse-ear cress), this protein is Mitogen-activated protein kinase kinase kinase 18.